The chain runs to 265 residues: Energy-coupling factor transporter ATP-binding protein EcfA1 (265 aa).

In terms of domain architecture, ABC transporter spans 2–236 (IKIKNLVFRY…KEIVELAKID (235 aa)). ATP is bound at residue 36 to 43 (GHNGSGKS).

It belongs to the ABC transporter superfamily. Energy-coupling factor EcfA family. Forms a stable energy-coupling factor (ECF) transporter complex composed of 2 membrane-embedded substrate-binding proteins (S component), 2 ATP-binding proteins (A component) and 2 transmembrane proteins (T component).

It is found in the cell membrane. Its function is as follows. ATP-binding (A) component of a common energy-coupling factor (ECF) ABC-transporter complex. Unlike classic ABC transporters this ECF transporter provides the energy necessary to transport a number of different substrates. This chain is Energy-coupling factor transporter ATP-binding protein EcfA1, found in Mycoplasmopsis pulmonis (strain UAB CTIP) (Mycoplasma pulmonis).